The following is a 487-amino-acid chain: UDP-N-acetylmuramate--L-alanine ligase (487 aa).

126–132 (GTHGKTT) lines the ATP pocket.

It belongs to the MurCDEF family.

Its subcellular location is the cytoplasm. It carries out the reaction UDP-N-acetyl-alpha-D-muramate + L-alanine + ATP = UDP-N-acetyl-alpha-D-muramoyl-L-alanine + ADP + phosphate + H(+). Its pathway is cell wall biogenesis; peptidoglycan biosynthesis. Functionally, cell wall formation. The polypeptide is UDP-N-acetylmuramate--L-alanine ligase (Proteus mirabilis (strain HI4320)).